A 1192-amino-acid chain; its full sequence is Probable phospholipid-transporting ATPase IM (1192 aa).

Topologically, residues 1 to 44 (MFCSEKKLREVERIVKANDREYNEKFQYADNRIHTSKYNILTFL) are cytoplasmic. Residues 45 to 66 (PINLFEQFQRVANAYFLCLLIL) traverse the membrane as a helical segment. Residues 67 to 72 (QLIPEI) are Exoplasmic loop-facing. A helical membrane pass occupies residues 73 to 92 (SSLTWFTTIVPLVLVITMTA). At 93 to 276 (VKDATDDYFR…TSIDRLMNTL (184 aa)) the chain is on the cytoplasmic side. The helical transmembrane segment at 277-298 (VLWIFGFLICLGIILAIGNSIW) threads the bilayer. Topologically, residues 299–327 (ESQTGDQFRTFLFWNEGEKSSVFSGFLTF) are exoplasmic loop. Residues 328-349 (WSYIIILNTVVPISLYVSVEVI) traverse the membrane as a helical segment. Over 350-871 (RLGHSYFINW…GRWSYFRMCK (522 aa)) the chain is Cytoplasmic. Asp-392 functions as the 4-aspartylphosphate intermediate in the catalytic mechanism. ATP contacts are provided by Asp-392, Lys-393, Thr-394, Glu-496, Phe-537, Lys-560, Arg-594, Thr-674, Gly-675, Asp-676, Arg-789, and Lys-795. Asp-392 provides a ligand contact to Mg(2+). Thr-394 is a Mg(2+) binding site. Mg(2+) is bound at residue Asp-815. ATP is bound by residues Asn-818 and Asp-819. Residue Asp-819 coordinates Mg(2+). Residues 872–892 (FLCYFFYKNFAFTLVHFWFGF) form a helical membrane-spanning segment. At 893–904 (FCGFSAQTVYDQ) the chain is on the exoplasmic loop side. Residues 905 to 924 (WFITLFNIVYTSLPVLAMGI) form a helical membrane-spanning segment. The Cytoplasmic portion of the chain corresponds to 925–954 (FDQDVSDQNSVDCPQLYKPGQLNLLFNKRK). Residues 955–976 (FFICVLHGIYTSLVLFFIPYGA) form a helical membrane-spanning segment. Over 977 to 990 (FYNVAGEDGQHIAD) the chain is Exoplasmic loop. A helical membrane pass occupies residues 991–1013 (YQSFAVTMATSLVIVVSVQIALD). Residues 1014–1019 (TSYWTF) lie on the Cytoplasmic side of the membrane. A helical membrane pass occupies residues 1020–1040 (INHVFIWGSIAIYFSILFTMH). Residues 1041–1060 (SNGIFGIFPNQFPFVGNARH) lie on the Exoplasmic loop side of the membrane. The helical transmembrane segment at 1061–1085 (SLTQKCIWLVILLTTVASVMPVVAF) threads the bilayer. Residues 1086–1192 (RFLKVDLYPT…SFSQDKTVKL (107 aa)) are Cytoplasmic-facing. Basic residues predominate over residues 1104–1125 (QKAQKKARPPSSRRPRTRRSSS). Disordered stretches follow at residues 1104 to 1130 (QKAQ…RSGY) and 1143 to 1163 (TSGK…EKTH).

It belongs to the cation transport ATPase (P-type) (TC 3.A.3) family. Type IV subfamily. Component of a P4-ATPase flippase complex which consists of a catalytic alpha subunit and an accessory beta subunit. Interacts with beta subunits TMEM30A and TMEM30B. It depends on Mg(2+) as a cofactor. As to expression, ubiquitously expressed at moderate levels.

Its subcellular location is the cell membrane. The protein localises to the golgi apparatus. The enzyme catalyses ATP + H2O + phospholipidSide 1 = ADP + phosphate + phospholipidSide 2.. Its function is as follows. Component of a P4-ATPase flippase complex which catalyzes the hydrolysis of ATP coupled to the transport of aminophospholipids from the outer to the inner leaflet of various membranes and ensures the maintenance of asymmetric distribution of phospholipids. Phospholipid translocation also seems to be implicated in vesicle formation and in uptake of lipid signaling molecules. This Homo sapiens (Human) protein is Probable phospholipid-transporting ATPase IM (ATP8B4).